The sequence spans 145 residues: Phospholipase A2 phospholipin (145 aa).

Residues 1–15 (MVDLARRCSGSTEGR) form the signal peptide. Ca(2+)-binding residues include W24, G26, and G28. Intrachain disulfides connect C25-C46, C45-C84, C52-C77, C75-C116, and C121-C132. The active site involves H49. D50 contributes to the Ca(2+) binding site. A propeptide spanning residues 124–128 (KRSGR) is cleaved from the precursor.

It belongs to the phospholipase A2 family. Group III subfamily. Heterodimer composed of a small subunit and a large subunit; disulfid-linked. Ca(2+) serves as cofactor. As to expression, expressed by the venom gland.

The protein resides in the secreted. The enzyme catalyses a 1,2-diacyl-sn-glycero-3-phosphocholine + H2O = a 1-acyl-sn-glycero-3-phosphocholine + a fatty acid + H(+). Scorpion venom phospholipase A2 (PLA2) that contains enzymatic activity, but does not inhibit ryanodine receptors in contrary to imperatoxin-1, another heterodimer of P.imperator venom. PLA2 catalyzes the calcium-dependent hydrolysis of the 2-acyl groups in 3-sn-phosphoglycerides. The sequence is that of Phospholipase A2 phospholipin from Pandinus imperator (Emperor scorpion).